Reading from the N-terminus, the 611-residue chain is Dihydroxy-acid dehydratase (611 aa).

Asp81 serves as a coordination point for Mg(2+). Cys122 serves as a coordination point for [2Fe-2S] cluster. Positions 123 and 124 each coordinate Mg(2+). Lys124 bears the N6-carboxylysine mark. Cys195 provides a ligand contact to [2Fe-2S] cluster. Glu491 is a binding site for Mg(2+). The Proton acceptor role is filled by Ser517.

It belongs to the IlvD/Edd family. In terms of assembly, homodimer. [2Fe-2S] cluster is required as a cofactor. Mg(2+) serves as cofactor.

The enzyme catalyses (2R)-2,3-dihydroxy-3-methylbutanoate = 3-methyl-2-oxobutanoate + H2O. It carries out the reaction (2R,3R)-2,3-dihydroxy-3-methylpentanoate = (S)-3-methyl-2-oxopentanoate + H2O. The protein operates within amino-acid biosynthesis; L-isoleucine biosynthesis; L-isoleucine from 2-oxobutanoate: step 3/4. It functions in the pathway amino-acid biosynthesis; L-valine biosynthesis; L-valine from pyruvate: step 3/4. In terms of biological role, functions in the biosynthesis of branched-chain amino acids. Catalyzes the dehydration of (2R,3R)-2,3-dihydroxy-3-methylpentanoate (2,3-dihydroxy-3-methylvalerate) into 2-oxo-3-methylpentanoate (2-oxo-3-methylvalerate) and of (2R)-2,3-dihydroxy-3-methylbutanoate (2,3-dihydroxyisovalerate) into 2-oxo-3-methylbutanoate (2-oxoisovalerate), the penultimate precursor to L-isoleucine and L-valine, respectively. This chain is Dihydroxy-acid dehydratase, found in Agrobacterium fabrum (strain C58 / ATCC 33970) (Agrobacterium tumefaciens (strain C58)).